Reading from the N-terminus, the 398-residue chain is Succinate--CoA ligase [ADP-forming] subunit beta (398 aa).

An ATP-grasp domain is found at 9–254; it reads KALLKSFGAP…KTEEDAKEIE (246 aa). ATP is bound by residues Lys-46, 53 to 55, Glu-109, Ala-112, and Glu-117; that span reads GRG. Residues Asn-209 and Asp-223 each contribute to the Mg(2+) site. Residues Asn-274 and 331–333 each bind substrate; that span reads GIM.

This sequence belongs to the succinate/malate CoA ligase beta subunit family. As to quaternary structure, heterotetramer of two alpha and two beta subunits. It depends on Mg(2+) as a cofactor.

The catalysed reaction is succinate + ATP + CoA = succinyl-CoA + ADP + phosphate. It carries out the reaction GTP + succinate + CoA = succinyl-CoA + GDP + phosphate. Its pathway is carbohydrate metabolism; tricarboxylic acid cycle; succinate from succinyl-CoA (ligase route): step 1/1. Succinyl-CoA synthetase functions in the citric acid cycle (TCA), coupling the hydrolysis of succinyl-CoA to the synthesis of either ATP or GTP and thus represents the only step of substrate-level phosphorylation in the TCA. The beta subunit provides nucleotide specificity of the enzyme and binds the substrate succinate, while the binding sites for coenzyme A and phosphate are found in the alpha subunit. The chain is Succinate--CoA ligase [ADP-forming] subunit beta from Allorhizobium ampelinum (strain ATCC BAA-846 / DSM 112012 / S4) (Agrobacterium vitis (strain S4)).